Consider the following 191-residue polypeptide: Small ribosomal subunit protein eS7 (191 aa).

Residue M1 is modified to N-acetylmethionine.

Belongs to the eukaryotic ribosomal protein eS7 family.

The polypeptide is Small ribosomal subunit protein eS7 (RPS7) (Brassica oleracea (Wild cabbage)).